Reading from the N-terminus, the 193-residue chain is Pyridoxal 5'-phosphate synthase subunit PdxT (193 aa).

Position 48-50 (48-50) interacts with L-glutamine; the sequence is GES. Catalysis depends on cysteine 80, which acts as the Nucleophile. Residues arginine 107 and 136-137 each bind L-glutamine; that span reads IR. Active-site charge relay system residues include histidine 172 and glutamate 174.

This sequence belongs to the glutaminase PdxT/SNO family. In terms of assembly, in the presence of PdxS, forms a dodecamer of heterodimers. Only shows activity in the heterodimer.

The catalysed reaction is aldehydo-D-ribose 5-phosphate + D-glyceraldehyde 3-phosphate + L-glutamine = pyridoxal 5'-phosphate + L-glutamate + phosphate + 3 H2O + H(+). It catalyses the reaction L-glutamine + H2O = L-glutamate + NH4(+). It participates in cofactor biosynthesis; pyridoxal 5'-phosphate biosynthesis. Catalyzes the hydrolysis of glutamine to glutamate and ammonia as part of the biosynthesis of pyridoxal 5'-phosphate. The resulting ammonia molecule is channeled to the active site of PdxS. The chain is Pyridoxal 5'-phosphate synthase subunit PdxT from Clostridium botulinum (strain Loch Maree / Type A3).